We begin with the raw amino-acid sequence, 1205 residues long: Caskin-2 (1205 aa).

ANK repeat units follow at residues 48-77, 81-110, 114-143, 147-176, 188-217, and 220-249; these read DGFS…SVDI, NGMR…SVNA, DGQI…NPCH, GKKT…CVSL, NFTT…EINK, and KMGT…DVNI. The 67-residue stretch at 281–347 folds into the SH3 domain; it reads SGILKVRALK…PPSIVEVISK (67 aa). 2 stretches are compositionally biased toward polar residues: residues 377–388 and 398–411; these read SPGSQLGINPDT and GSES…SGQS. Residues 377 to 411 form a disordered region; that stretch reads SPGSQLGINPDTSVAGDRHSVGSESSVRSAGSGQS. SAM domains follow at residues 468-531 and 537-601; these read KDAE…LIVA and QIPV…LLDL. A compositionally biased stretch (low complexity) spans 666–687; sequence RRSFSQESISSRSQGSGHSQES. 4 disordered regions span residues 666–689, 784–964, 984–1054, and 1132–1155; these read RRSF…ESAS, RPGR…QRHL, QIAA…SQEP, and SEAS…KGPP. Over residues 823-840 the composition is skewed to polar residues; it reads SSMSSAEGQSPEGQSSVK. The span at 908–919 shows a compositional bias: low complexity; the sequence is ISSQHSSSESIP. The span at 942–959 shows a compositional bias: polar residues; the sequence is DATSELSPTQESQLQSAE. Residues 1009-1037 are compositionally biased toward basic and acidic residues; it reads KNEEHDFNLTESDTVKRRPKVKEKEEESP. Polar residues-rich tracts occupy residues 1042 to 1054 and 1137 to 1155; these read ANNS…SQEP and REQT…KGPP.

The protein is Caskin-2 (caskin2) of Xenopus laevis (African clawed frog).